Here is a 172-residue protein sequence, read N- to C-terminus: uncharacterized protein (172 aa).

One can recognise an HTH cro/C1-type domain in the interval F21 to N75. Residues L32 to Q51 constitute a DNA-binding region (H-T-H motif).

This is an uncharacterized protein from Methanocaldococcus jannaschii (strain ATCC 43067 / DSM 2661 / JAL-1 / JCM 10045 / NBRC 100440) (Methanococcus jannaschii).